The sequence spans 66 residues: UPF0434 protein Nwi_0075 (66 aa).

Belongs to the UPF0434 family.

The chain is UPF0434 protein Nwi_0075 from Nitrobacter winogradskyi (strain ATCC 25391 / DSM 10237 / CIP 104748 / NCIMB 11846 / Nb-255).